We begin with the raw amino-acid sequence, 89 residues long: Small ribosomal subunit protein uS15 (89 aa).

A disordered region spans residues 1–23 (MSLDTTEKQQLINANQTHGTDTG). The segment covering 8-23 (KQQLINANQTHGTDTG) has biased composition (polar residues).

The protein belongs to the universal ribosomal protein uS15 family. In terms of assembly, part of the 30S ribosomal subunit. Forms a bridge to the 50S subunit in the 70S ribosome, contacting the 23S rRNA.

Functionally, one of the primary rRNA binding proteins, it binds directly to 16S rRNA where it helps nucleate assembly of the platform of the 30S subunit by binding and bridging several RNA helices of the 16S rRNA. Its function is as follows. Forms an intersubunit bridge (bridge B4) with the 23S rRNA of the 50S subunit in the ribosome. This is Small ribosomal subunit protein uS15 from Prochlorococcus marinus (strain MIT 9313).